Here is a 113-residue protein sequence, read N- to C-terminus: TGSGKYNILHNDNHNLDLTGKFLECSRSNPNLSDYNKYSAILDYLYKDKLSASLGVAHSGLLDRTDLSALGKVNLLNDKNTRLDLFGGLTKSMSPKFDSGLKPNFGLQLESSF.

Belongs to the attacin/sarcotoxin-2 family.

The protein resides in the secreted. Functionally, has antibacterial activity against both Gram-positive and Gram-negative bacteria. The protein is Defense protein 2 of Lonomia obliqua (Moth).